Here is a 546-residue protein sequence, read N- to C-terminus: uncharacterized protein (546 aa).

The next 9 membrane-spanning stretches (helical) occupy residues 27-46 (EALVLLSILFFVPGIFPFVF), 59-78 (NGLIQCYPVAAFFAVLALVT), 83-100 (FALIWWMYTVFNALYAIL), 114-134 (SVLFGLIYLAGGGFWFFAYAA), 143-163 (PLIILLTAVHFHYSAFLIPIF), 176-196 (MLYSWITWVILLSPLLIALGI), 204-224 (VIAVSIYMAAIYLHAFLVFTA), 237-257 (LSSAVLMITIAFSMIYSFGVF), and 268-288 (MIWIHGFVNAFGVILPALIGW).

The protein resides in the cell membrane. This is an uncharacterized protein from Bacillus subtilis (strain 168).